The following is a 386-amino-acid chain: Putative matrix metalloproteinase (386 aa).

A signal peptide spans 1-34; that stretch reads MPTAHFQHSIRYLNVTNMLIFSIISFLLIYQTNS. N-linked (GlcNAc...) asparagine; by host glycosylation is found at N14 and N58. Zn(2+) is bound at residue H186. Residue E187 is part of the active site. Zn(2+) is bound by residues H190 and H196. The tract at residues 235 to 258 is disordered; sequence NEQSTHQSTRHRPHRRPSPDGSCR.

Belongs to the peptidase M10A family. It depends on Zn(2+) as a cofactor.

This is Putative matrix metalloproteinase from Spodoptera frugiperda (Fall armyworm).